Reading from the N-terminus, the 416-residue chain is Serine hydroxymethyltransferase (416 aa).

(6S)-5,6,7,8-tetrahydrofolate is bound by residues Leu-118 and 122-124; that span reads GHL. Lys-226 bears the N6-(pyridoxal phosphate)lysine mark. Glu-242 is a (6S)-5,6,7,8-tetrahydrofolate binding site.

Belongs to the SHMT family. As to quaternary structure, homodimer. It depends on pyridoxal 5'-phosphate as a cofactor.

The protein localises to the cytoplasm. The catalysed reaction is (6R)-5,10-methylene-5,6,7,8-tetrahydrofolate + glycine + H2O = (6S)-5,6,7,8-tetrahydrofolate + L-serine. Its pathway is one-carbon metabolism; tetrahydrofolate interconversion. It participates in amino-acid biosynthesis; glycine biosynthesis; glycine from L-serine: step 1/1. In terms of biological role, catalyzes the reversible interconversion of serine and glycine with tetrahydrofolate (THF) serving as the one-carbon carrier. This reaction serves as the major source of one-carbon groups required for the biosynthesis of purines, thymidylate, methionine, and other important biomolecules. Also exhibits THF-independent aldolase activity toward beta-hydroxyamino acids, producing glycine and aldehydes, via a retro-aldol mechanism. The chain is Serine hydroxymethyltransferase from Helicobacter pylori (strain HPAG1).